Consider the following 255-residue polypeptide: 3-alpha-(or 20-beta)-hydroxysteroid dehydrogenase (255 aa).

10–34 (IITGGARGLGAEAARQAVAAGARVV) contacts NAD(+). Ser139 contributes to the substrate binding site. Tyr152 (proton acceptor) is an active-site residue.

It belongs to the short-chain dehydrogenases/reductases (SDR) family. In terms of assembly, homotetramer.

The catalysed reaction is androstan-3alpha,17beta-diol + NAD(+) = 17beta-hydroxyandrostanone + NADH + H(+). The protein operates within lipid metabolism; C21-steroid hormone metabolism. In Streptomyces exfoliatus (Streptomyces hydrogenans), this protein is 3-alpha-(or 20-beta)-hydroxysteroid dehydrogenase.